A 131-amino-acid polypeptide reads, in one-letter code: Holo-[acyl-carrier-protein] synthase (131 aa).

Mg(2+)-binding residues include aspartate 8 and glutamate 57.

It belongs to the P-Pant transferase superfamily. AcpS family. It depends on Mg(2+) as a cofactor.

Its subcellular location is the cytoplasm. The enzyme catalyses apo-[ACP] + CoA = holo-[ACP] + adenosine 3',5'-bisphosphate + H(+). Functionally, transfers the 4'-phosphopantetheine moiety from coenzyme A to a Ser of acyl-carrier-protein. The chain is Holo-[acyl-carrier-protein] synthase from Desulforudis audaxviator (strain MP104C).